A 193-amino-acid polypeptide reads, in one-letter code: dCTP deaminase (193 aa).

Residues 110-115, D128, 136-138, Y171, K178, and Q182 contribute to the dCTP site; these read RSSLAR and VLE. The Proton donor/acceptor role is filled by E138.

Belongs to the dCTP deaminase family. Homotrimer.

It carries out the reaction dCTP + H2O + H(+) = dUTP + NH4(+). It participates in pyrimidine metabolism; dUMP biosynthesis; dUMP from dCTP (dUTP route): step 1/2. Its function is as follows. Catalyzes the deamination of dCTP to dUTP. The chain is dCTP deaminase from Buchnera aphidicola subsp. Schizaphis graminum (strain Sg).